Reading from the N-terminus, the 31-residue chain is Alcohol dehydrogenase 1 (31 aa).

C7 contacts Zn(2+).

This sequence belongs to the zinc-containing alcohol dehydrogenase family. Class-P subfamily. As to quaternary structure, homodimer. Requires Zn(2+) as cofactor.

It localises to the cytoplasm. It catalyses the reaction a primary alcohol + NAD(+) = an aldehyde + NADH + H(+). The catalysed reaction is a secondary alcohol + NAD(+) = a ketone + NADH + H(+). The protein is Alcohol dehydrogenase 1 of Catharanthus roseus (Madagascar periwinkle).